Here is a 505-residue protein sequence, read N- to C-terminus: Oxidative stress-induced growth inhibitor 2 (505 aa).

This sequence belongs to the OKL38 family. NADPH is required as a cofactor. In terms of tissue distribution, ubiquitous. Expressed at higher levels in testis and ovary.

The protein resides in the midbody. Monooxygenase catalytic activity. May be involved in meiosis or the maturation of germ cells. This chain is Oxidative stress-induced growth inhibitor 2, found in Homo sapiens (Human).